Here is a 211-residue protein sequence, read N- to C-terminus: Ras-related protein RABB1c (211 aa).

S2 carries the N-acetylserine modification. Residue 13-21 coordinates GTP; sequence GDTGVGKSC. Residues 35-43 carry the Effector region motif; that stretch reads HDLTIGVEF. Residues 61–65, 119–122, and 149–151 each bind GTP; these read DTAGQ, NKCD, and SAK. 2 S-geranylgeranyl cysteine lipidation sites follow: C209 and C210.

The protein belongs to the small GTPase superfamily. Rab family.

It is found in the cell membrane. In terms of biological role, intracellular vesicle trafficking and protein transport. This is Ras-related protein RABB1c (RABB1C) from Arabidopsis thaliana (Mouse-ear cress).